A 282-amino-acid polypeptide reads, in one-letter code: D-alanine aminotransferase (282 aa).

Position 32 (Y32) interacts with substrate. R51 lines the pyridoxal 5'-phosphate pocket. Residues R99 and H101 each coordinate substrate. The active-site Proton acceptor is the K146. N6-(pyridoxal phosphate)lysine is present on K146. E178 contacts pyridoxal 5'-phosphate.

This sequence belongs to the class-IV pyridoxal-phosphate-dependent aminotransferase family. As to quaternary structure, homodimer. The cofactor is pyridoxal 5'-phosphate.

The catalysed reaction is D-alanine + 2-oxoglutarate = D-glutamate + pyruvate. Acts on the D-isomers of alanine, leucine, aspartate, glutamate, aminobutyrate, norvaline and asparagine. The enzyme transfers an amino group from a substrate D-amino acid to the pyridoxal phosphate cofactor to form pyridoxamine and an alpha-keto acid in the first half-reaction. The second half-reaction is the reverse of the first, transferring the amino group from the pyridoxamine to a second alpha-keto acid to form the product D-amino acid via a ping-pong mechanism. This is an important process in the formation of D-alanine and D-glutamate, which are essential bacterial cell wall components. This Staphylococcus aureus (strain MSSA476) protein is D-alanine aminotransferase (dat).